The sequence spans 136 residues: Large ribosomal subunit protein uL16 (136 aa).

Belongs to the universal ribosomal protein uL16 family. As to quaternary structure, part of the 50S ribosomal subunit.

Functionally, binds 23S rRNA and is also seen to make contacts with the A and possibly P site tRNAs. This is Large ribosomal subunit protein uL16 from Vibrio campbellii (strain ATCC BAA-1116).